A 105-amino-acid chain; its full sequence is Small ribosomal subunit protein uS10 (105 aa).

The protein belongs to the universal ribosomal protein uS10 family. Part of the 30S ribosomal subunit.

Functionally, involved in the binding of tRNA to the ribosomes. The polypeptide is Small ribosomal subunit protein uS10 (Chlamydia pneumoniae (Chlamydophila pneumoniae)).